Here is a 355-residue protein sequence, read N- to C-terminus: 3-dehydroquinate synthase (355 aa).

Residues 71 to 76, 105 to 109, 129 to 130, lysine 142, and lysine 151 each bind NAD(+); these read EGEASK, GVVGD, and TS. Zn(2+)-binding residues include glutamate 184, histidine 246, and histidine 263.

It belongs to the sugar phosphate cyclases superfamily. Dehydroquinate synthase family. Co(2+) is required as a cofactor. It depends on Zn(2+) as a cofactor. The cofactor is NAD(+).

The protein resides in the cytoplasm. It carries out the reaction 7-phospho-2-dehydro-3-deoxy-D-arabino-heptonate = 3-dehydroquinate + phosphate. It functions in the pathway metabolic intermediate biosynthesis; chorismate biosynthesis; chorismate from D-erythrose 4-phosphate and phosphoenolpyruvate: step 2/7. Functionally, catalyzes the conversion of 3-deoxy-D-arabino-heptulosonate 7-phosphate (DAHP) to dehydroquinate (DHQ). In Streptococcus gordonii (strain Challis / ATCC 35105 / BCRC 15272 / CH1 / DL1 / V288), this protein is 3-dehydroquinate synthase.